The primary structure comprises 858 residues: Zinc finger protein ZXDC (858 aa).

2 disordered regions span residues 1–127 (MDLP…APAG) and 151–174 (PGPATAGAAAPRRAPQASGPSTPG). Composition is skewed to low complexity over residues 23–35 (PLRRAPAPLGASP), 84–97 (GGAAAEAAGSQEAE), and 151–171 (PGPATAGAAAPRRAPQASGPS). Ser34 carries the phosphoserine modification. The residue at position 172 (Thr172) is a Phosphothreonine. C2H2-type zinc fingers lie at residues 175–199 (YRCPEPQCALAFAKKHQLKVHLLTH), 208–232 (FKCPLEGCGWAFTTSYKLKRHLQSH), 238–262 (FGCPVGGCGKKFTTVYNLKAHMKGH), 268–290 (FKCEVCAERFPTHAKLSSHQRSH), 297–321 (YKCDFPGCEKTFITVSALFSHNRAH), 328–352 (FSCSFPGCSKQYDKACRLKIHLRSH), 358–382 (FICDSDSCGWTFTSMSKLLRHRRKH), 388–412 (FTCPVEGCGKSFTRAEHLKGHSITH), 418–442 (FECPVEGCCARFSARSSLYIHSKKH), and 451–476 (SRCPVSTCNRLFTSKHSMKAHMVRQH). Residues 579 to 688 (DSPLVLGTAA…HGLPQSTLPS (110 aa)) are required for transcriptional activation. A Glycyl lysine isopeptide (Lys-Gly) (interchain with G-Cter in SUMO) cross-link involves residue Lys660. Disordered regions lie at residues 660–696 (KVEPDSPSRPGAVGQQEGSHGLPQSTLPSPAEQHGAQ), 726–756 (KEKKQRGAGSNAGASQSTQRKIKEGKMSPPH), and 837–858 (GGPAGPEATQFPGSTINLQDLQ). A Phosphoserine modification is found at Ser665. Residues 675 to 687 (QEGSHGLPQSTLP) show a composition bias toward polar residues. Residues 781–858 (PAAGVQCGAQ…GSTINLQDLQ (78 aa)) form an interaction with CIITA region. A compositionally biased stretch (polar residues) spans 847-858 (FPGSTINLQDLQ).

Belongs to the ZXD family. Self-associates. Interacts with ZXDA and CIITA. Sumoylated at Lys-660 with SUMO1, SUMO2 and SUMO3; sumoylation enhances the activity of the transcriptional activation domain. In terms of tissue distribution, expressed at high levels in heart, kidney, liver and testis, at moderate levels in brain and stomach, and at low levels in lung, muscle, placenta, small intestine and spleen.

Its subcellular location is the nucleus. Functionally, cooperates with CIITA to promote transcription of MHC class I and MHC class II genes. This is Zinc finger protein ZXDC (ZXDC) from Homo sapiens (Human).